Reading from the N-terminus, the 237-residue chain is MNLVAPTPWGLFFQDSATPQMEGIEELHNNIMFYLTIILFSVTWMMITIIKSFVNTKSPISHKYMNHGTLIELIWTITPAVILILIAFPSFKLLYLMDEVMDPSLVIYGEGHQWYWSYQYPDFTNADGEFVEFDSYIVPESDLEEGTLRMLEVDNRVIIPELTHTRFVISAADVIHSFACPSLGIKCDAYPGRLNQSSVYLNRQGTYFGQCSEICGILHSSMPIVIQSVSLKNFYYD.

The Mitochondrial intermembrane portion of the chain corresponds to 1-30; that stretch reads MNLVAPTPWGLFFQDSATPQMEGIEELHNN. Residues 31–51 form a helical membrane-spanning segment; that stretch reads IMFYLTIILFSVTWMMITIIK. The Mitochondrial matrix segment spans residues 52–67; sequence SFVNTKSPISHKYMNH. A helical transmembrane segment spans residues 68-94; sequence GTLIELIWTITPAVILILIAFPSFKLL. Topologically, residues 95-237 are mitochondrial intermembrane; it reads YLMDEVMDPS…SVSLKNFYYD (143 aa). Positions 176, 211, 213, 215, 219, and 222 each coordinate Cu cation. E213 is a Mg(2+) binding site.

The protein belongs to the cytochrome c oxidase subunit 2 family. As to quaternary structure, component of the cytochrome c oxidase (complex IV, CIV), a multisubunit enzyme composed of a catalytic core of 3 subunits and several supernumerary subunits. The complex exists as a monomer or a dimer and forms supercomplexes (SCs) in the inner mitochondrial membrane with ubiquinol-cytochrome c oxidoreductase (cytochrome b-c1 complex, complex III, CIII). Cu cation is required as a cofactor.

The protein resides in the mitochondrion inner membrane. The catalysed reaction is 4 Fe(II)-[cytochrome c] + O2 + 8 H(+)(in) = 4 Fe(III)-[cytochrome c] + 2 H2O + 4 H(+)(out). Functionally, component of the cytochrome c oxidase, the last enzyme in the mitochondrial electron transport chain which drives oxidative phosphorylation. The respiratory chain contains 3 multisubunit complexes succinate dehydrogenase (complex II, CII), ubiquinol-cytochrome c oxidoreductase (cytochrome b-c1 complex, complex III, CIII) and cytochrome c oxidase (complex IV, CIV), that cooperate to transfer electrons derived from NADH and succinate to molecular oxygen, creating an electrochemical gradient over the inner membrane that drives transmembrane transport and the ATP synthase. Cytochrome c oxidase is the component of the respiratory chain that catalyzes the reduction of oxygen to water. Electrons originating from reduced cytochrome c in the intermembrane space (IMS) are transferred via the dinuclear copper A center (CU(A)) of subunit 2 and heme A of subunit 1 to the active site in subunit 1, a binuclear center (BNC) formed by heme A3 and copper B (CU(B)). The BNC reduces molecular oxygen to 2 water molecules using 4 electrons from cytochrome c in the IMS and 4 protons from the mitochondrial matrix. The protein is Cytochrome c oxidase subunit 2 (COX2) of Trichophyton rubrum (Athlete's foot fungus).